Consider the following 69-residue polypeptide: Large ribosomal subunit protein uL29 (69 aa).

Belongs to the universal ribosomal protein uL29 family.

The polypeptide is Large ribosomal subunit protein uL29 (Lachnoclostridium phytofermentans (strain ATCC 700394 / DSM 18823 / ISDg) (Clostridium phytofermentans)).